The primary structure comprises 156 residues: Ribosome maturation factor RimP (156 aa).

It belongs to the RimP family.

Its subcellular location is the cytoplasm. Its function is as follows. Required for maturation of 30S ribosomal subunits. The polypeptide is Ribosome maturation factor RimP (Prochlorococcus marinus (strain NATL2A)).